The primary structure comprises 117 residues: Large ribosomal subunit protein bL19 (117 aa).

This sequence belongs to the bacterial ribosomal protein bL19 family.

This protein is located at the 30S-50S ribosomal subunit interface and may play a role in the structure and function of the aminoacyl-tRNA binding site. This is Large ribosomal subunit protein bL19 from Azobacteroides pseudotrichonymphae genomovar. CFP2.